The following is a 225-amino-acid chain: Urease accessory protein UreF (225 aa).

Belongs to the UreF family. As to quaternary structure, ureD, UreF and UreG form a complex that acts as a GTP-hydrolysis-dependent molecular chaperone, activating the urease apoprotein by helping to assemble the nickel containing metallocenter of UreC. The UreE protein probably delivers the nickel.

Its subcellular location is the cytoplasm. Required for maturation of urease via the functional incorporation of the urease nickel metallocenter. This Thermosynechococcus vestitus (strain NIES-2133 / IAM M-273 / BP-1) protein is Urease accessory protein UreF.